A 274-amino-acid chain; its full sequence is Elongation factor Ts (274 aa).

The interval 82 to 85 (TDFV) is involved in Mg(2+) ion dislocation from EF-Tu.

This sequence belongs to the EF-Ts family.

The protein localises to the cytoplasm. Associates with the EF-Tu.GDP complex and induces the exchange of GDP to GTP. It remains bound to the aminoacyl-tRNA.EF-Tu.GTP complex up to the GTP hydrolysis stage on the ribosome. The protein is Elongation factor Ts of Christiangramia forsetii (strain DSM 17595 / CGMCC 1.15422 / KT0803) (Gramella forsetii).